The chain runs to 264 residues: Small ribosomal subunit protein uS2 (264 aa).

Belongs to the universal ribosomal protein uS2 family.

This chain is Small ribosomal subunit protein uS2, found in Helicobacter pylori (strain P12).